A 782-amino-acid chain; its full sequence is E3 ubiquitin-protein ligase SopA (782 aa).

The tract at residues 137 to 171 is disordered; it reads VSVSANNRPTVSEGRTPPVSPSLSLQATSSPSSPA. Residues 157-171 are compositionally biased toward low complexity; it reads PSLSLQATSSPSSPA. C753 (glycyl thioester intermediate) is an active-site residue.

The protein belongs to the SopA E3 ligase family. Ubiquitinated in the presence of host E1 ubiquitin-activating enzyme, E2 ubiquitin-conjugating enzyme and ubiquitin.

It is found in the secreted. The protein resides in the host cell. The enzyme catalyses S-ubiquitinyl-[E2 ubiquitin-conjugating enzyme]-L-cysteine + [acceptor protein]-L-lysine = [E2 ubiquitin-conjugating enzyme]-L-cysteine + N(6)-ubiquitinyl-[acceptor protein]-L-lysine.. In terms of biological role, effector proteins function to alter host cell physiology and promote bacterial survival in host tissues. This protein is an E3 ubiquitin ligase that interferes with host's ubiquitination pathway. This is E3 ubiquitin-protein ligase SopA (sopA) from Salmonella newport (strain SL254).